The following is a 256-amino-acid chain: Imidazole glycerol phosphate synthase subunit HisF (256 aa).

Active-site residues include Asp12 and Asp131.

This sequence belongs to the HisA/HisF family. As to quaternary structure, heterodimer of HisH and HisF.

Its subcellular location is the cytoplasm. The catalysed reaction is 5-[(5-phospho-1-deoxy-D-ribulos-1-ylimino)methylamino]-1-(5-phospho-beta-D-ribosyl)imidazole-4-carboxamide + L-glutamine = D-erythro-1-(imidazol-4-yl)glycerol 3-phosphate + 5-amino-1-(5-phospho-beta-D-ribosyl)imidazole-4-carboxamide + L-glutamate + H(+). It functions in the pathway amino-acid biosynthesis; L-histidine biosynthesis; L-histidine from 5-phospho-alpha-D-ribose 1-diphosphate: step 5/9. IGPS catalyzes the conversion of PRFAR and glutamine to IGP, AICAR and glutamate. The HisF subunit catalyzes the cyclization activity that produces IGP and AICAR from PRFAR using the ammonia provided by the HisH subunit. In Pseudomonas syringae pv. tomato (strain ATCC BAA-871 / DC3000), this protein is Imidazole glycerol phosphate synthase subunit HisF.